The primary structure comprises 784 residues: MPHTLWMVWVLGVIISLSKEESSNQASLSCDHNGICKGSSGSLNSIPSVLTEAVKCLDLSNNRITYISNSDLQRYVNLQALVLTSNGINTIEEDSFSSLGRLEHLDLSYNYLSNLSSSWFKPLSSLKFLNLLGNPYKTLGETSLFSHLTKLRILRVGNMDTFTKIQRKDFAGLTFLEELEIDASDLQSYEPKSLKSIQNVSHLILHMKQHILLLEIFVDLTSSVECLELRDTDLNTFHFSELSTGETNSLIKKFTFRNVKITDESLFQVMKLLSQISGLLELEFDDCTLNGVGDFRGSDNDRVIDPGKVETLTIRRLHIPQFYSFNDLSTLYPLTERVKRITVENSKVFLVPCLLSRHLKSLEYLDLSENLMVEEYLKNSACEDAWPSLQTLILRQNHLASLGKIGETLLTLKNLTNLDISKNTFHYMPETCQWPEKMKYLNLSSTRIHSVTGCIPKTLEILDISNNNLNLFSLNLPQLKELYISRNKLMTLPDASLLPMLLVLKISRNTITTFSKEQLDSFHTLKTLEAGGNNFICSCEFLSFTQEQQALAKVLVDWPANYLCDSPSHVRGQRVQDVRLSVSECHRAALVSGMCCALFLLILLMGVLCHRFHGLWYMKMMWAWLQAKRKPRKAPNRDICYDAFVSYSERDAYWVENLMVQELENFNPPFKLCLHKRDFIPGKWIIDNIIDSIEKSHKTVFVLSENFVKSEWCKYELDFSHFRLFDENNDAAILVLLEPIEKKAIPQRFCKLRKIMNTKTYLEWPMDEARQEGFWVNLRAAIKS.

The first 20 residues, 1–20 (MPHTLWMVWVLGVIISLSKE), serve as a signal peptide directing secretion. The Extracellular portion of the chain corresponds to 21–587 (ESSNQASLSC…VRLSVSECHR (567 aa)). C30 and C36 are disulfide-bonded. LRR repeat units follow at residues 54–77 (VKCLDLSNNRITYISNSDLQRYVN), 78–101 (LQALVLTSNGINTIEEDSFSSLGR), 102–125 (LEHLDLSYNYLSNLSSSWFKPLSS), 126–150 (LKFLNLLGNPYKTLGETSLFSHLTK), 151–175 (LRILRVGNMDTFTKIQRKDFAGLTF), 176–199 (LEELEIDASDLQSYEPKSLKSIQN), 200–223 (VSHLILHMKQHILLLEIFVDLTSS), 224–250 (VECLELRDTDLNTFHFSELSTGETNSL), 251–278 (IKKFTFRNVKITDESLFQVMKLLSQISG), 279–308 (LLELEFDDCTLNGVGDFRGSDNDRVIDPGK), 309–337 (VETLTIRRLHIPQFYSFNDLSTLYPLTER), 338–361 (VKRITVENSKVFLVPCLLSRHLKS), 362–388 (LEYLDLSENLMVEEYLKNSACEDAWPS), 389–414 (LQTLILRQNHLASLGKIGETLLTLKN), 415–437 (LTNLDISKNTFHYMPETCQWPEK), 438–457 (MKYLNLSSTRIHSVTGCIPK), 458–478 (TLEILDISNNNLNLFSLNLPQ), 479–500 (LKELYISRNKLMTLPDASLLPM), and 501–524 (LLVLKISRNTITTFSKEQLDSFHT). N-linked (GlcNAc...) asparagine glycosylation is present at N114. N199 carries an N-linked (GlcNAc...) asparagine glycan. Residues C353 and C382 are joined by a disulfide bond. N414 is a glycosylation site (N-linked (GlcNAc...) asparagine). C432 and C454 are disulfide-bonded. N-linked (GlcNAc...) asparagine glycosylation is present at N442. An LRRCT domain is found at 525-579 (LKTLEAGGNNFICSCEFLSFTQEQQALAKVLVDWPANYLCDSPSHVRGQRVQDVR). The chain crosses the membrane as a helical span at residues 588–608 (AALVSGMCCALFLLILLMGVL). Residues 609–784 (CHRFHGLWYM…WVNLRAAIKS (176 aa)) lie on the Cytoplasmic side of the membrane. Residues 639-782 (ICYDAFVSYS…GFWVNLRAAI (144 aa)) enclose the TIR domain. Residue K754 forms a Glycyl lysine isopeptide (Lys-Gly) (interchain with G-Cter in ubiquitin) linkage. An ATG16L1-binding motif motif is present at residues 761-778 (YLEWPMDEARQEGFWVNL).

The protein belongs to the Toll-like receptor family. As to quaternary structure, interacts with LY96, TLR1 and TLR6 (via extracellular domain). TLR2 seems to exist in heterodimers with either TLR1 or TLR6 before stimulation by the ligand. The heterodimers form bigger oligomers in response to their corresponding ligands as well as further heterotypic associations with other receptors such as CD14 and/or CD36. Binds MYD88 (via TIR domain). Interacts with TICAM1. Interacts with CNPY3. Interacts with ATG16L1. Interacts with PPP1R11. Interacts with TICAM2. Interacts with TIRAP. Ubiquitinated at Lys-754 by PPP1R11, leading to its degradation. Deubiquitinated by USP2. Post-translationally, glycosylation of Asn-442 is critical for secretion of the N-terminal ectodomain of TLR2.

The protein localises to the membrane. It localises to the cytoplasmic vesicle. Its subcellular location is the phagosome membrane. It is found in the membrane raft. Functionally, cooperates with LY96 to mediate the innate immune response to bacterial lipoproteins and other microbial cell wall components. Cooperates with TLR1 or TLR6 to mediate the innate immune response to bacterial lipoproteins or lipopeptides. Acts via MYD88 and TRAF6, leading to NF-kappa-B activation, cytokine secretion and the inflammatory response. May also promote apoptosis in response to lipoproteins. Forms activation clusters composed of several receptors depending on the ligand, these clusters trigger signaling from the cell surface and subsequently are targeted to the Golgi in a lipid-raft dependent pathway. Forms the cluster TLR2:TLR6:CD14:CD36 in response to diacylated lipopeptides and TLR2:TLR1:CD14 in response to triacylated lipopeptides. The sequence is that of Toll-like receptor 2 (TLR2) from Macaca mulatta (Rhesus macaque).